We begin with the raw amino-acid sequence, 346 residues long: Anthocyanidin 3-O-glucosyltransferase 2 (346 aa).

Residues Ala221, Gln223, His238, Trp241, Asn242, Ser243, and Glu246 each contribute to the UDP-alpha-D-glucose site. Ala261 contacts an anthocyanidin. UDP-alpha-D-glucose-binding residues include Glu262 and Gln263.

The protein belongs to the UDP-glycosyltransferase family. In terms of tissue distribution, expressed in cotyledons, roots and leaves.

It catalyses the reaction an anthocyanidin + UDP-alpha-D-glucose + H(+) = an anthocyanidin 3-O-beta-D-glucoside + UDP. It functions in the pathway pigment biosynthesis; anthocyanin biosynthesis. In the presence of other necessary color factors, this glycosylation reaction allows the accumulation of anthocyanin pigments. The sequence is that of Anthocyanidin 3-O-glucosyltransferase 2 (GT2) from Manihot esculenta (Cassava).